Consider the following 220-residue polypeptide: Membrane steroid-binding protein 1 (220 aa).

Residues 22–42 (VVFFTALALAFAIYQVISGWF) form a helical membrane-spanning segment. Residues 74-171 (EITEEELKQY…SKYAKVGTVK (98 aa)) enclose the Cytochrome b5 heme-binding domain. A steroid-binding region spans residues 74–171 (EITEEELKQY…SKYAKVGTVK (98 aa)). The segment at 174 to 220 (GSEPETASVSEPTENVEQDAHVTTTPGKTVVDKSDDAPAETVLKKEE) is disordered. The segment covering 178–200 (ETASVSEPTENVEQDAHVTTTPG) has biased composition (polar residues). The span at 203-220 (VVDKSDDAPAETVLKKEE) shows a compositional bias: basic and acidic residues.

It belongs to the cytochrome b5 family. MAPR subfamily. In terms of assembly, interacts with BAK1 (via extracellular region). Expressed in cotyledons, stems, roots, leaves, flower and silique stalks, pistils and stigmas, but not in anthers.

The protein localises to the cell membrane. It localises to the endosome membrane. Its function is as follows. MSBP1 can bind to multiple steroid compounds with different affinities. Negatively regulates cell elongation and brassinosteroid signaling. May act as a coreceptor with BAK1 and enhances its endocytosis. This is Membrane steroid-binding protein 1 (MSBP1) from Arabidopsis thaliana (Mouse-ear cress).